A 269-amino-acid chain; its full sequence is Undecaprenyl-diphosphatase (269 aa).

The next 8 helical transmembrane spans lie at 1–21 (MDIM…ILPI), 40–59 (GLTF…CVYF), 87–107 (FFII…EKPI), 117–137 (LIAL…TTGP), 147–166 (LRGA…PGVS), 188–208 (FSFL…MGEL), 220–240 (PLLA…ALLL), and 248–268 (LYPF…YLFA).

This sequence belongs to the UppP family.

The protein resides in the cell inner membrane. It catalyses the reaction di-trans,octa-cis-undecaprenyl diphosphate + H2O = di-trans,octa-cis-undecaprenyl phosphate + phosphate + H(+). Functionally, catalyzes the dephosphorylation of undecaprenyl diphosphate (UPP). Confers resistance to bacitracin. The protein is Undecaprenyl-diphosphatase of Geobacter sulfurreducens (strain ATCC 51573 / DSM 12127 / PCA).